The chain runs to 407 residues: Phosphopentomutase (407 aa).

Mn(2+) is bound by residues D10, D306, H311, D347, H348, and H359.

The protein belongs to the phosphopentomutase family. Mn(2+) serves as cofactor.

The protein resides in the cytoplasm. It catalyses the reaction 2-deoxy-alpha-D-ribose 1-phosphate = 2-deoxy-D-ribose 5-phosphate. It carries out the reaction alpha-D-ribose 1-phosphate = D-ribose 5-phosphate. Its pathway is carbohydrate degradation; 2-deoxy-D-ribose 1-phosphate degradation; D-glyceraldehyde 3-phosphate and acetaldehyde from 2-deoxy-alpha-D-ribose 1-phosphate: step 1/2. Functionally, isomerase that catalyzes the conversion of deoxy-ribose 1-phosphate (dRib-1-P) and ribose 1-phosphate (Rib-1-P) to deoxy-ribose 5-phosphate (dRib-5-P) and ribose 5-phosphate (Rib-5-P), respectively. This Salmonella gallinarum (strain 287/91 / NCTC 13346) protein is Phosphopentomutase.